Consider the following 304-residue polypeptide: Recombination-associated protein RdgC (304 aa).

It belongs to the RdgC family.

It localises to the cytoplasm. Its subcellular location is the nucleoid. Functionally, may be involved in recombination. This chain is Recombination-associated protein RdgC, found in Shewanella sp. (strain MR-4).